We begin with the raw amino-acid sequence, 641 residues long: Toxin TseL (641 aa).

As to quaternary structure, interacts with VgrG3; this interaction allows TseL secretion to target cells.

Its subcellular location is the secreted. Its function is as follows. Toxin secreted by the type VI (T6SS) secretion system that acts on prokaryotic as well as eukaryotic target cells. The polypeptide is Toxin TseL (Vibrio cholerae serotype O1 (strain ATCC 39315 / El Tor Inaba N16961)).